A 251-amino-acid polypeptide reads, in one-letter code: Triosephosphate isomerase (251 aa).

Position 9–11 (9–11 (NWK)) interacts with substrate. The Electrophile role is filled by His-95. Glu-167 functions as the Proton acceptor in the catalytic mechanism. Substrate is bound by residues Gly-173, Ser-213, and 234–235 (GG).

Belongs to the triosephosphate isomerase family. In terms of assembly, homodimer.

Its subcellular location is the cytoplasm. The catalysed reaction is D-glyceraldehyde 3-phosphate = dihydroxyacetone phosphate. Its pathway is carbohydrate biosynthesis; gluconeogenesis. It functions in the pathway carbohydrate degradation; glycolysis; D-glyceraldehyde 3-phosphate from glycerone phosphate: step 1/1. In terms of biological role, involved in the gluconeogenesis. Catalyzes stereospecifically the conversion of dihydroxyacetone phosphate (DHAP) to D-glyceraldehyde-3-phosphate (G3P). In Fusobacterium nucleatum subsp. nucleatum (strain ATCC 25586 / DSM 15643 / BCRC 10681 / CIP 101130 / JCM 8532 / KCTC 2640 / LMG 13131 / VPI 4355), this protein is Triosephosphate isomerase.